A 357-amino-acid polypeptide reads, in one-letter code: DNA integrity scanning protein DisA (357 aa).

A DAC domain is found at 8–146 (VKSMINILQL…GNLRYTLKDI (139 aa)). ATP-binding positions include Gly-75, Leu-93, and 106–110 (MRHRT).

The protein belongs to the DisA family. As to quaternary structure, homooctamer. Requires Mg(2+) as cofactor.

It catalyses the reaction 2 ATP = 3',3'-c-di-AMP + 2 diphosphate. Functionally, participates in a DNA-damage check-point that is active prior to asymmetric division when DNA is damaged. DisA forms globular foci that rapidly scan along the chromosomes during sporulation, searching for lesions. When a lesion is present, DisA pauses at the lesion site. This triggers a cellular response that culminates in a temporary block in sporulation initiation. In terms of biological role, also has diadenylate cyclase activity, catalyzing the condensation of 2 ATP molecules into cyclic di-AMP (c-di-AMP). c-di-AMP acts as a signaling molecule that couples DNA integrity with progression of sporulation. The rise in c-di-AMP level generated by DisA while scanning the chromosome, operates as a positive signal that advances sporulation; upon encountering a lesion, the DisA focus arrests at the damaged site and halts c-di-AMP synthesis. The sequence is that of DNA integrity scanning protein DisA from Bacillus anthracis (strain CDC 684 / NRRL 3495).